We begin with the raw amino-acid sequence, 943 residues long: Coiled-coil and C2 domain-containing protein 1A (943 aa).

At Thr-91 the chain carries Phosphothreonine. Disordered regions lie at residues 186-250 (NEAD…CSPL) and 300-337 (DLSR…VPQP). Composition is skewed to low complexity over residues 195–206 (ASGKGAAAGHSH) and 229–238 (APSTTTPTSA). Position 248 is a phosphoserine (Ser-248). Over residues 304–319 (LPPPPDQLSPEPPLPA) the composition is skewed to pro residues. A coiled-coil region spans residues 339 to 385 (RNLLEALEQRMERYHVAAAQAKAKGDQRKARMHERIVKQYQDAIRAH). The segment at 430–483 (NHDEGSDDEEEETPKKQNTPAASTTQLKSSPSKAPPSGPAPAGKAAPKGTSNRA) is disordered. At Ser-435 the chain carries Phosphoserine. The segment covering 445–456 (KQNTPAASTTQL) has biased composition (polar residues). The span at 469 to 478 (APAGKAAPKG) shows a compositional bias: low complexity. The stretch at 477–510 (KGTSNRAQQQLAFLEGRKKQLLQAALRAKQKNDV) forms a coiled coil. The C2 domain occupies 630–764 (RFEQRTFSVI…ETACEVHEIL (135 aa)).

This sequence belongs to the CC2D1 family. In terms of tissue distribution, highly expressed in brain, expression is enriched in the gray matter and strongest in the olfactory bulb.

The protein resides in the cytoplasm. It is found in the nucleus. Its subcellular location is the cytoskeleton. The protein localises to the microtubule organizing center. It localises to the centrosome. In terms of biological role, transcription factor that binds specifically to the DRE (dual repressor element) and represses HTR1A gene transcription in neuronal cells. The combination of calcium and ATP specifically inactivates the binding with FRE. May play a role in the altered regulation of HTR1A associated with anxiety and major depression. Mediates HDAC-independent repression of HTR1A promoter in neuronal cell. Performs essential function in controlling functional maturation of synapses. This Mus musculus (Mouse) protein is Coiled-coil and C2 domain-containing protein 1A (Cc2d1a).